Consider the following 335-residue polypeptide: Ornithine carbamoyltransferase (335 aa).

Carbamoyl phosphate-binding positions include 60-63 (STRT), glutamine 87, arginine 111, and 138-141 (HPTQ). L-ornithine contacts are provided by residues asparagine 171, aspartate 235, and 239 to 240 (SM). Carbamoyl phosphate is bound by residues 277–278 (CL) and arginine 322.

The protein belongs to the aspartate/ornithine carbamoyltransferase superfamily. OTCase family.

Its subcellular location is the cytoplasm. It catalyses the reaction carbamoyl phosphate + L-ornithine = L-citrulline + phosphate + H(+). It participates in amino-acid biosynthesis; L-arginine biosynthesis; L-arginine from L-ornithine and carbamoyl phosphate: step 1/3. Reversibly catalyzes the transfer of the carbamoyl group from carbamoyl phosphate (CP) to the N(epsilon) atom of ornithine (ORN) to produce L-citrulline. This is Ornithine carbamoyltransferase from Streptomyces avermitilis (strain ATCC 31267 / DSM 46492 / JCM 5070 / NBRC 14893 / NCIMB 12804 / NRRL 8165 / MA-4680).